The chain runs to 182 residues: Large ribosomal subunit protein uL5 (182 aa).

Belongs to the universal ribosomal protein uL5 family. As to quaternary structure, part of the 50S ribosomal subunit; part of the 5S rRNA/L5/L18/L25 subcomplex. Contacts the 5S rRNA and the P site tRNA. Forms a bridge to the 30S subunit in the 70S ribosome.

This is one of the proteins that bind and probably mediate the attachment of the 5S RNA into the large ribosomal subunit, where it forms part of the central protuberance. In the 70S ribosome it contacts protein S13 of the 30S subunit (bridge B1b), connecting the 2 subunits; this bridge is implicated in subunit movement. Contacts the P site tRNA; the 5S rRNA and some of its associated proteins might help stabilize positioning of ribosome-bound tRNAs. This chain is Large ribosomal subunit protein uL5, found in Borrelia duttonii (strain Ly).